A 756-amino-acid chain; its full sequence is MINNHTLGFPRIGLFRELKVAQEKYWSRKISKEELFSVGKTLRVRHWQQQKELGINYIPVGDFSWYDHVLGTSMLLGNIPKRHKNGNDLVTLDTLFRVARGVAPTGASVSASEMTKWFNTNYHYIVPEFSIKSEFCFSWRQILDEIDEALLLGHQVKPVILGPLTYLWLGKVKGKKFDRLNLLKEILPVYKYLLSEINDRNISWVQIDEPILTLELPEKWKNAFRFAYQSLYGYNSLLLTTYFGSVQHNFSLICELPIQGVHLDLVHGKYDLVFLNSFIPEKWLISLGIINGKNIWKADLVMWFKRLQLFSKLRHSLWIGTSCSLLHVPIDLKLENKISSEVRSWFSFALQKCQELTLLRDALNNSNTVTEDIRVWSQPIHSRKKSAIVHNVDVKERLKSITSNDFKRNNVFSVRKQKQHKNLKLPILPTTTIGSFPQTADIRKARFDFKKGNINHDQYNTFISKHIQNAILKQEKLGIDVLVHGEFERNDMVEYFGEHLNGFVFTEFGWVQSYGSRCVKPPIIIGDVSRSKPISLDWIKYAQTLTSKPVKGMLTGPVTILLWSFVREDLSKKIISRQIALALRDEVLDLEQSGVKIIQIDEPALREGLPLRLSLRNEYLSWAVDSFKLSSSGVCDETQIHTHMCYCEFNDIMNAIVLLDADVITIETSRSDMELLEFFKEFKYPNDIGPGVYDIHSPNIPSIEWIMTLLRQAMHYIPVKRLWVNPDCGLKTRTWDETYYSLENMVRAAKILRKKL.

Residues arginine 16–lysine 19 and lysine 116 contribute to the 5-methyltetrahydropteroyltri-L-glutamate site. L-homocysteine contacts are provided by residues isoleucine 433–serine 435 and glutamate 486. Residues isoleucine 433–serine 435 and glutamate 486 contribute to the L-methionine site. 5-methyltetrahydropteroyltri-L-glutamate contacts are provided by residues arginine 517–cysteine 518 and tryptophan 563. Aspartate 601 lines the L-homocysteine pocket. Aspartate 601 contributes to the L-methionine binding site. Glutamate 607 serves as a coordination point for 5-methyltetrahydropteroyltri-L-glutamate. Zn(2+)-binding residues include histidine 643, cysteine 645, and glutamate 667. The active-site Proton donor is the histidine 696. Cysteine 728 is a Zn(2+) binding site.

This sequence belongs to the vitamin-B12 independent methionine synthase family. Zn(2+) serves as cofactor.

The enzyme catalyses 5-methyltetrahydropteroyltri-L-glutamate + L-homocysteine = tetrahydropteroyltri-L-glutamate + L-methionine. It functions in the pathway amino-acid biosynthesis; L-methionine biosynthesis via de novo pathway; L-methionine from L-homocysteine (MetE route): step 1/1. Catalyzes the transfer of a methyl group from 5-methyltetrahydrofolate to homocysteine resulting in methionine formation. This is 5-methyltetrahydropteroyltriglutamate--homocysteine methyltransferase from Buchnera aphidicola subsp. Baizongia pistaciae (strain Bp).